Reading from the N-terminus, the 437-residue chain is Eukaryotic peptide chain release factor subunit 1 (437 aa).

Alanine 2 is modified (N-acetylalanine). Positions 61 to 64 (NIKS) match the NIKS motif; plays an important role in translational termination motif. The residue at position 63 (lysine 63) is a 4-hydroxylysine. Lysine 87 participates in a covalent cross-link: Glycyl lysine isopeptide (Lys-Gly) (interchain with G-Cter in SUMO2). Glutamine 185 carries the N5-methylglutamine modification. Phosphothreonine is present on threonine 347. Lysine 404 participates in a covalent cross-link: Glycyl lysine isopeptide (Lys-Gly) (interchain with G-Cter in SUMO2).

This sequence belongs to the eukaryotic release factor 1 family. Component of the eRF1-eRF3-GTP ternary complex, composed of ETF1/ERF1 and eRF3 (GSPT1/ERF3A or GSPT2/ERF3B) and GTP. Component of the transient SURF (SMG1-UPF1-eRF1-eRF3) complex. Interacts with JMJD4. The ETF1-GSPT1 complex interacts with JMJD4. In terms of processing, hydroxylation at Lys-63 by JMJD4 promotes its translational termination efficiency. Post-translationally, methylated at Gln-185 by N6AMT1. Ubiquitinated via 'Lys-6'-linked polyubiquitin chains by RNF14 and RNF25 in response to ribosome collisions (ribosome stalling), leading to its degradation by the proteasome and rescue of stalled ribosomes.

It localises to the cytoplasm. Functionally, component of the eRF1-eRF3-GTP ternary complex, a ternary complex that mediates translation termination in response to the termination codons. The eRF1-eRF3-GTP complex binds to a stop codon in the ribosomal A-site. ETF1/ERF1 is responsible for stop codon recognition and inducing hydrolysis of peptidyl-tRNA. Following GTP hydrolysis, eRF3 (GSPT1/ERF3A or GSPT2/ERF3B) dissociates, permitting ETF1/eRF1 to accommodate fully in the A-site, followed by hydrolysis of peptidyl-tRNA. Component of the transient SURF complex which recruits UPF1 to stalled ribosomes in the context of nonsense-mediated decay (NMD) of mRNAs containing premature stop codons. Required for SHFL-mediated translation termination which inhibits programmed ribosomal frameshifting (-1PRF) of mRNA from viruses and cellular genes. The polypeptide is Eukaryotic peptide chain release factor subunit 1 (ETF1) (Pongo abelii (Sumatran orangutan)).